Reading from the N-terminus, the 118-residue chain is Evasin P1080 (118 aa).

A signal peptide spans 1 to 19 (FFQLAVFVVILFNINLLSA). 3 disulfide bridges follow: C41-C60, C45-C62, and C56-C73. N44 carries N-linked (GlcNAc...) asparagine glycosylation. N-linked (GlcNAc...) asparagine glycans are attached at residues N67 and N104.

It is found in the secreted. Salivary chemokine-binding protein which binds to host chemokines CXCL1, CXCL2, CXCL3, CXCL4, CXCL5, CXCL6, CXCL10, CXCL11 and CXCL13. The sequence is that of Evasin P1080 from Ixodes ricinus (Common tick).